Here is a 120-residue protein sequence, read N- to C-terminus: Jacalin-related lectin 39 (120 aa).

In terms of domain architecture, Jacalin-type lectin spans 6–120 (SRDHADFVAH…KRTFDFGGFN (115 aa)).

It belongs to the jacalin lectin family.

This Arabidopsis thaliana (Mouse-ear cress) protein is Jacalin-related lectin 39 (JAL39).